The chain runs to 591 residues: Aspartate--tRNA(Asp/Asn) ligase (591 aa).

E174 contributes to the L-aspartate binding site. An aspartate region spans residues 198–201 (QLFK). R220 lines the L-aspartate pocket. ATP-binding positions include 220-222 (RDE) and Q229. H450 lines the L-aspartate pocket. Residue E483 participates in ATP binding. Residue R490 participates in L-aspartate binding. ATP is bound at residue 535-538 (GLDR).

The protein belongs to the class-II aminoacyl-tRNA synthetase family. Type 1 subfamily. Homodimer.

The protein resides in the cytoplasm. The enzyme catalyses tRNA(Asx) + L-aspartate + ATP = L-aspartyl-tRNA(Asx) + AMP + diphosphate. Aspartyl-tRNA synthetase with relaxed tRNA specificity since it is able to aspartylate not only its cognate tRNA(Asp) but also tRNA(Asn). Reaction proceeds in two steps: L-aspartate is first activated by ATP to form Asp-AMP and then transferred to the acceptor end of tRNA(Asp/Asn). This is Aspartate--tRNA(Asp/Asn) ligase from Pseudomonas putida (strain W619).